We begin with the raw amino-acid sequence, 451 residues long: Trigger factor (451 aa).

In terms of domain architecture, PPIase FKBP-type spans 165–250; the sequence is DDKLTIDFEG…LHQIQAREVL (86 aa).

The protein belongs to the FKBP-type PPIase family. Tig subfamily.

It is found in the cytoplasm. It carries out the reaction [protein]-peptidylproline (omega=180) = [protein]-peptidylproline (omega=0). Functionally, involved in protein export. Acts as a chaperone by maintaining the newly synthesized protein in an open conformation. Functions as a peptidyl-prolyl cis-trans isomerase. The chain is Trigger factor from Helicobacter acinonychis (strain Sheeba).